The primary structure comprises 257 residues: Diphthine synthase (257 aa).

Residues L9, D85, V88, 113–114 (SI), L164, A207, and H232 contribute to the S-adenosyl-L-methionine site.

The protein belongs to the diphthine synthase family. As to quaternary structure, homodimer.

It carries out the reaction 2-[(3S)-amino-3-carboxypropyl]-L-histidyl-[translation elongation factor 2] + 3 S-adenosyl-L-methionine = diphthine-[translation elongation factor 2] + 3 S-adenosyl-L-homocysteine + 3 H(+). It participates in protein modification; peptidyl-diphthamide biosynthesis. S-adenosyl-L-methionine-dependent methyltransferase that catalyzes the trimethylation of the amino group of the modified target histidine residue in translation elongation factor 2 (EF-2), to form an intermediate called diphthine. The three successive methylation reactions represent the second step of diphthamide biosynthesis. The polypeptide is Diphthine synthase (Methanococcus aeolicus (strain ATCC BAA-1280 / DSM 17508 / OCM 812 / Nankai-3)).